Here is a 193-residue protein sequence, read N- to C-terminus: Xanthine phosphoribosyltransferase (193 aa).

Leucine 20 and asparagine 27 together coordinate xanthine. 128 to 132 (ANGDA) is a 5-phospho-alpha-D-ribose 1-diphosphate binding site. Position 156 (lysine 156) interacts with xanthine.

This sequence belongs to the purine/pyrimidine phosphoribosyltransferase family. Xpt subfamily. In terms of assembly, homodimer.

It is found in the cytoplasm. It carries out the reaction XMP + diphosphate = xanthine + 5-phospho-alpha-D-ribose 1-diphosphate. It participates in purine metabolism; XMP biosynthesis via salvage pathway; XMP from xanthine: step 1/1. Its function is as follows. Converts the preformed base xanthine, a product of nucleic acid breakdown, to xanthosine 5'-monophosphate (XMP), so it can be reused for RNA or DNA synthesis. The polypeptide is Xanthine phosphoribosyltransferase (Staphylococcus haemolyticus (strain JCSC1435)).